The primary structure comprises 455 residues: Ribulose bisphosphate carboxylase large chain (455 aa).

An N6,N6,N6-trimethyllysine modification is found at lysine 5. The substrate site is built by asparagine 114 and threonine 164. The active-site Proton acceptor is the lysine 166. Position 168 (lysine 168) interacts with substrate. Residues lysine 192, aspartate 194, and glutamate 195 each coordinate Mg(2+). N6-carboxylysine is present on lysine 192. Histidine 285 acts as the Proton acceptor in catalysis. The substrate site is built by arginine 286, histidine 318, and serine 370.

Belongs to the RuBisCO large chain family. Type I subfamily. Heterohexadecamer of 8 large chains and 8 small chains; disulfide-linked. The disulfide link is formed within the large subunit homodimers. Requires Mg(2+) as cofactor. In terms of processing, the disulfide bond which can form in the large chain dimeric partners within the hexadecamer appears to be associated with oxidative stress and protein turnover.

The protein resides in the plastid. Its subcellular location is the chloroplast. The enzyme catalyses 2 (2R)-3-phosphoglycerate + 2 H(+) = D-ribulose 1,5-bisphosphate + CO2 + H2O. It catalyses the reaction D-ribulose 1,5-bisphosphate + O2 = 2-phosphoglycolate + (2R)-3-phosphoglycerate + 2 H(+). In terms of biological role, ruBisCO catalyzes two reactions: the carboxylation of D-ribulose 1,5-bisphosphate, the primary event in carbon dioxide fixation, as well as the oxidative fragmentation of the pentose substrate in the photorespiration process. Both reactions occur simultaneously and in competition at the same active site. This is Ribulose bisphosphate carboxylase large chain from Lupinus albus (White lupine).